Here is a 388-residue protein sequence, read N- to C-terminus: Valine--pyruvate aminotransferase (388 aa).

An N6-(pyridoxal phosphate)lysine modification is found at K234.

Belongs to the class-I pyridoxal-phosphate-dependent aminotransferase family. Requires pyridoxal 5'-phosphate as cofactor.

The catalysed reaction is L-valine + pyruvate = 3-methyl-2-oxobutanoate + L-alanine. This is Valine--pyruvate aminotransferase from Mycobacterium tuberculosis (strain ATCC 25618 / H37Rv).